The primary structure comprises 303 residues: Ferrochelatase (303 aa).

Residues H185 and E262 each coordinate Fe cation.

Belongs to the ferrochelatase family.

It localises to the cytoplasm. The catalysed reaction is heme b + 2 H(+) = protoporphyrin IX + Fe(2+). It participates in porphyrin-containing compound metabolism; protoheme biosynthesis; protoheme from protoporphyrin-IX: step 1/1. In terms of biological role, catalyzes the ferrous insertion into protoporphyrin IX. The protein is Ferrochelatase of Campylobacter jejuni subsp. doylei (strain ATCC BAA-1458 / RM4099 / 269.97).